The following is a 128-amino-acid chain: Holo-[acyl-carrier-protein] synthase (128 aa).

Positions 8 and 60 each coordinate Mg(2+).

The protein belongs to the P-Pant transferase superfamily. AcpS family. Mg(2+) serves as cofactor.

Its subcellular location is the cytoplasm. The catalysed reaction is apo-[ACP] + CoA = holo-[ACP] + adenosine 3',5'-bisphosphate + H(+). Its function is as follows. Transfers the 4'-phosphopantetheine moiety from coenzyme A to a Ser of acyl-carrier-protein. The polypeptide is Holo-[acyl-carrier-protein] synthase (Anaeromyxobacter dehalogenans (strain 2CP-C)).